Reading from the N-terminus, the 408-residue chain is Glutamate N-acetyltransferase (408 aa).

Residues Thr-150, Lys-176, Thr-189, Glu-271, Asn-403, and Thr-408 each coordinate substrate. The active-site Nucleophile is Thr-189.

Belongs to the ArgJ family. In terms of assembly, heterotetramer of two alpha and two beta chains.

Its subcellular location is the cytoplasm. It carries out the reaction N(2)-acetyl-L-ornithine + L-glutamate = N-acetyl-L-glutamate + L-ornithine. Its pathway is amino-acid biosynthesis; L-arginine biosynthesis; L-ornithine and N-acetyl-L-glutamate from L-glutamate and N(2)-acetyl-L-ornithine (cyclic): step 1/1. In terms of biological role, catalyzes the transfer of the acetyl group from N(2)-acetylornithine to glutamate, forming N-acetylglutamate and L-ornithine. This chain is Glutamate N-acetyltransferase, found in Methanococcus vannielii (strain ATCC 35089 / DSM 1224 / JCM 13029 / OCM 148 / SB).